A 521-amino-acid polypeptide reads, in one-letter code: Bifunctional dihydrofolate reductase-thymidylate synthase (521 aa).

Positions 17–194 constitute a DHFR domain; it reads NYQVVVAGTR…IRHSFVSFVR (178 aa). Substrate is bound at residue Val21. NADP(+)-binding positions include Ala23 and 29–35; that span reads GIGKDGV. Substrate is bound at residue Asp43. NADP(+) contacts are provided by residues 67-69 and 88-91; these read RKT and LTRS. Residue Ile130 coordinates substrate. An NADP(+)-binding site is contributed by 131–138; it reads GGGQVLRE. Thr151 contributes to the substrate binding site. The tract at residues 197-521 is thymidylate synthase; the sequence is KSVAETHESN…HQKIEMKMAV (325 aa). Arg258 provides a ligand contact to dUMP. Cys403 is an active-site residue. Residues His404, 422-426, Asn434, and 464-466 contribute to the dUMP site; these read QRSAD and HVY.

The protein in the N-terminal section; belongs to the dihydrofolate reductase family. This sequence in the C-terminal section; belongs to the thymidylate synthase family.

It catalyses the reaction (6S)-5,6,7,8-tetrahydrofolate + NADP(+) = 7,8-dihydrofolate + NADPH + H(+). The catalysed reaction is dUMP + (6R)-5,10-methylene-5,6,7,8-tetrahydrofolate = 7,8-dihydrofolate + dTMP. It participates in cofactor biosynthesis; tetrahydrofolate biosynthesis; 5,6,7,8-tetrahydrofolate from 7,8-dihydrofolate: step 1/1. Bifunctional enzyme. Involved in de novo dTMP biosynthesis. Key enzyme in folate metabolism. Can play two different roles depending on the source of dihydrofolate: de novo synthesis of tetrahydrofolate or recycling of the dihydrofolate released as one of the end products of the TS catalyzed reaction. Catalyzes an essential reaction for de novo glycine and purine synthesis, DNA precursor synthesis, and for the conversion of dUMP to dTMP. This Zea mays (Maize) protein is Bifunctional dihydrofolate reductase-thymidylate synthase (DRTS).